The sequence spans 383 residues: Chaperone protein DnaJ (383 aa).

Residues 5–70 (DYYEVLGVAK…EKRAAYDRFG (66 aa)) form the J domain. A CR-type zinc finger spans residues 139–217 (GKTETIRIPT…CSGAGRVNRE (79 aa)). The Zn(2+) site is built by Cys152, Cys155, Cys169, Cys172, Cys191, Cys194, Cys205, and Cys208. CXXCXGXG motif repeat units lie at residues 152-159 (CEACSGTG), 169-176 (CSTCGGYG), 191-198 (CPNCHGRG), and 205-212 (CTACSGAG).

The protein belongs to the DnaJ family. As to quaternary structure, homodimer. It depends on Zn(2+) as a cofactor.

The protein localises to the cytoplasm. Functionally, participates actively in the response to hyperosmotic and heat shock by preventing the aggregation of stress-denatured proteins and by disaggregating proteins, also in an autonomous, DnaK-independent fashion. Unfolded proteins bind initially to DnaJ; upon interaction with the DnaJ-bound protein, DnaK hydrolyzes its bound ATP, resulting in the formation of a stable complex. GrpE releases ADP from DnaK; ATP binding to DnaK triggers the release of the substrate protein, thus completing the reaction cycle. Several rounds of ATP-dependent interactions between DnaJ, DnaK and GrpE are required for fully efficient folding. Also involved, together with DnaK and GrpE, in the DNA replication of plasmids through activation of initiation proteins. This chain is Chaperone protein DnaJ, found in Methylorubrum populi (strain ATCC BAA-705 / NCIMB 13946 / BJ001) (Methylobacterium populi).